A 450-amino-acid chain; its full sequence is UDP-N-acetylmuramoylalanine--D-glutamate ligase (450 aa).

119–125 (GSNGKTT) lines the ATP pocket.

It belongs to the MurCDEF family.

It localises to the cytoplasm. The enzyme catalyses UDP-N-acetyl-alpha-D-muramoyl-L-alanine + D-glutamate + ATP = UDP-N-acetyl-alpha-D-muramoyl-L-alanyl-D-glutamate + ADP + phosphate + H(+). It functions in the pathway cell wall biogenesis; peptidoglycan biosynthesis. Cell wall formation. Catalyzes the addition of glutamate to the nucleotide precursor UDP-N-acetylmuramoyl-L-alanine (UMA). This Streptococcus pneumoniae (strain ATCC 700669 / Spain 23F-1) protein is UDP-N-acetylmuramoylalanine--D-glutamate ligase.